Reading from the N-terminus, the 157-residue chain is uncharacterized protein (157 aa).

In terms of domain architecture, N-acetyltransferase spans Leu-9 to Thr-146.

This is an uncharacterized protein from Bacillus cereus (strain AH187).